A 589-amino-acid polypeptide reads, in one-letter code: Splicing factor U2af large subunit B (589 aa).

The disordered stretch occupies residues 1–195 (MMSYEGNGDG…KRRSGFDMAP (195 aa)). Over residues 14–27 (STENHNENYISLES) the composition is skewed to polar residues. Basic and acidic residues-rich tracts occupy residues 29–100 (PFHE…DRQR) and 109–145 (RDRS…DREV). 2 stretches are compositionally biased toward basic residues: residues 146–156 (RHRRRSRSRSR) and 164–188 (RSEH…SKRR). RRM domains are found at residues 255–338 (RRVY…RPTD), 375–453 (DRIF…RAIQ), and 494–580 (QVVT…YPED).

The protein belongs to the splicing factor SR family. In terms of assembly, component of the spliceosome. Interacts with SF1 in the nucleus.

Its subcellular location is the nucleus. It is found in the nucleus speckle. Its function is as follows. Necessary for the splicing of pre-mRNA. This Arabidopsis thaliana (Mouse-ear cress) protein is Splicing factor U2af large subunit B.